The chain runs to 316 residues: UDP-N-acetylenolpyruvoylglucosamine reductase (316 aa).

Positions 27 to 225 (VGGKAERFYR…KTAINALLKK (199 aa)) constitute an FAD-binding PCMH-type domain. Arginine 190 is an active-site residue. Serine 239 serves as the catalytic Proton donor. Glutamate 309 is an active-site residue.

The protein belongs to the MurB family. The cofactor is FAD.

Its subcellular location is the cytoplasm. It catalyses the reaction UDP-N-acetyl-alpha-D-muramate + NADP(+) = UDP-N-acetyl-3-O-(1-carboxyvinyl)-alpha-D-glucosamine + NADPH + H(+). It participates in cell wall biogenesis; peptidoglycan biosynthesis. In terms of biological role, cell wall formation. The chain is UDP-N-acetylenolpyruvoylglucosamine reductase from Coxiella burnetii (strain Dugway 5J108-111).